A 730-amino-acid chain; its full sequence is MFQRKRSVSFGGYGWIDKTMLASLKMKKQELLSSADVTLPERPLSPPLTAPPTMKSAEFFEMLEKMQAPKLEDQKAGSQKHKEDYIPYPSIDEILEKGSPYPLVILPQFGGYWIEDPENLGTPTSSDSSVCEEEEENFSPSPYGYKLECKGEARAYRKHFLGKDHLNFYCTASSLGNLILSIKCEEVDGTEYLRIILRSKVKTLHERIPLAGFSKLPSIPQIAKAFCDDASGLKFNPVLYPKASQMIVAYDEHEVNNTFKFGVIYQKFRQTQEEELFGNNEESAAFRNFLNLLGDTITLQDFKGFRGGLDVSHGQTGVESVYTVFRDREIMFHVSTKLPFTEGDTQQLQRKRHIGNDIVAIIFQEENTPFVPDMIASNFLHAYIVVQVENPDADTTSYKVSVTAREDVPSFGPPLPSPPVFQKSPEFREFLLTKLINAENACCKSDKFAKLEDRTRAALLDNLHDELHGHTQTMLGLGPEEDKLENGGHGGFLESFKRAIRVRSHSMETMVGSQRKQHGGGIPGSLSGGIAHNSGEVTKTTFSPPVSAATAKNQSRSPIKRRSGLFPRLHTGLESQVDSRARCDSISGPQKTPDVGHSSQEMKSETSSNPSSPEICPNKDRPFVKLKENGRSNISRSSSSTSSFSSTAGESETLEEYDSVGSQPSTASPFKQDVFIYSASPGSDSPSVGAAATPVIMSRSPTDIKNRNSPRSNLKFRFDKLSHGSSSTSH.

In terms of domain architecture, Rap-GAP spans 247–463; the sequence is IVAYDEHEVN…RTRAALLDNL (217 aa). Disordered stretches follow at residues 510–668 and 698–730; these read MVGS…STAS and SRSP…STSH. 2 stretches are compositionally biased toward polar residues: residues 535-557 and 597-612; these read GEVT…QSRS and HSSQ…NPSS. The span at 617-630 shows a compositional bias: basic and acidic residues; it reads PNKDRPFVKLKENG. Over residues 631–651 the composition is skewed to low complexity; it reads RSNISRSSSSTSSFSSTAGES. Over residues 699 to 712 the composition is skewed to polar residues; sequence RSPTDIKNRNSPRS.

It is found in the cytoplasm. Functionally, GTPase activator for the nuclear Ras-related regulatory protein RAP-1A (KREV-1), converting it to the putatively inactive GDP-bound state. The polypeptide is Rap1 GTPase-activating protein 2 (RAP1GAP2) (Gallus gallus (Chicken)).